The following is a 100-amino-acid chain: Aspartyl/glutamyl-tRNA(Asn/Gln) amidotransferase subunit C (100 aa).

Belongs to the GatC family. As to quaternary structure, heterotrimer of A, B and C subunits.

It carries out the reaction L-glutamyl-tRNA(Gln) + L-glutamine + ATP + H2O = L-glutaminyl-tRNA(Gln) + L-glutamate + ADP + phosphate + H(+). It catalyses the reaction L-aspartyl-tRNA(Asn) + L-glutamine + ATP + H2O = L-asparaginyl-tRNA(Asn) + L-glutamate + ADP + phosphate + 2 H(+). Allows the formation of correctly charged Asn-tRNA(Asn) or Gln-tRNA(Gln) through the transamidation of misacylated Asp-tRNA(Asn) or Glu-tRNA(Gln) in organisms which lack either or both of asparaginyl-tRNA or glutaminyl-tRNA synthetases. The reaction takes place in the presence of glutamine and ATP through an activated phospho-Asp-tRNA(Asn) or phospho-Glu-tRNA(Gln). This Rickettsia felis (strain ATCC VR-1525 / URRWXCal2) (Rickettsia azadi) protein is Aspartyl/glutamyl-tRNA(Asn/Gln) amidotransferase subunit C.